A 429-amino-acid chain; its full sequence is UDP-N-acetylglucosamine 1-carboxyvinyltransferase (429 aa).

22–23 serves as a coordination point for phosphoenolpyruvate; that stretch reads KN. Position 102 (Arg-102) interacts with UDP-N-acetyl-alpha-D-glucosamine. Residue Cys-126 is the Proton donor of the active site. 2-(S-cysteinyl)pyruvic acid O-phosphothioketal is present on Cys-126. Residues 131-135, Asp-316, and Ile-338 each bind UDP-N-acetyl-alpha-D-glucosamine; that span reads RPVDL.

The protein belongs to the EPSP synthase family. MurA subfamily.

Its subcellular location is the cytoplasm. It catalyses the reaction phosphoenolpyruvate + UDP-N-acetyl-alpha-D-glucosamine = UDP-N-acetyl-3-O-(1-carboxyvinyl)-alpha-D-glucosamine + phosphate. It functions in the pathway cell wall biogenesis; peptidoglycan biosynthesis. Its function is as follows. Cell wall formation. Adds enolpyruvyl to UDP-N-acetylglucosamine. The chain is UDP-N-acetylglucosamine 1-carboxyvinyltransferase from Methylobacterium radiotolerans (strain ATCC 27329 / DSM 1819 / JCM 2831 / NBRC 15690 / NCIMB 10815 / 0-1).